A 181-amino-acid chain; its full sequence is Adenine phosphoribosyltransferase 2 (181 aa).

Residue Ser-2 is modified to N-acetylserine.

The protein belongs to the purine/pyrimidine phosphoribosyltransferase family.

The protein resides in the cytoplasm. The catalysed reaction is AMP + diphosphate = 5-phospho-alpha-D-ribose 1-diphosphate + adenine. Its pathway is purine metabolism; AMP biosynthesis via salvage pathway; AMP from adenine: step 1/1. In terms of biological role, catalyzes a salvage reaction resulting in the formation of AMP, that is energically less costly than de novo synthesis. May lack catalytic activity. This Saccharomyces cerevisiae (strain ATCC 204508 / S288c) (Baker's yeast) protein is Adenine phosphoribosyltransferase 2 (APT2).